Here is a 328-residue protein sequence, read N- to C-terminus: GTPase Obg 2 (328 aa).

The Obg domain occupies 1 to 139; sequence MSFRREKFIE…HCVLLKLKIV (139 aa). The 170-residue stretch at 140–309 folds into the OBG-type G domain; that stretch reads SDVGIIGMPN…LHAQVKKAVV (170 aa). GTP contacts are provided by residues 146–153, 171–175, 192–195, 259–262, and 290–292; these read GMPNAGKS, FTTLE, DIPG, NKCD, and GDE. Mg(2+) is bound by residues Ser-153 and Thr-173.

Belongs to the TRAFAC class OBG-HflX-like GTPase superfamily. OBG GTPase family. In terms of assembly, monomer. Requires Mg(2+) as cofactor.

The protein localises to the cytoplasm. Its function is as follows. An essential GTPase which binds GTP, GDP and possibly (p)ppGpp with moderate affinity, with high nucleotide exchange rates and a fairly low GTP hydrolysis rate. Plays a role in control of the cell cycle, stress response, ribosome biogenesis and in those bacteria that undergo differentiation, in morphogenesis control. The chain is GTPase Obg 2 from Anaplasma marginale (strain Florida).